A 279-amino-acid polypeptide reads, in one-letter code: Large ribosomal subunit protein uL2 (279 aa).

A disordered region spans residues 224-279; that stretch reads AMNPIDHPHGGGEGRTSGGRHPVTPWGKGTKGNRTRKSKASDKLIVRSRHAKKKGR. Residues 269–279 show a composition bias toward basic residues; that stretch reads VRSRHAKKKGR.

Belongs to the universal ribosomal protein uL2 family. Part of the 50S ribosomal subunit. Forms a bridge to the 30S subunit in the 70S ribosome.

Its function is as follows. One of the primary rRNA binding proteins. Required for association of the 30S and 50S subunits to form the 70S ribosome, for tRNA binding and peptide bond formation. It has been suggested to have peptidyltransferase activity; this is somewhat controversial. Makes several contacts with the 16S rRNA in the 70S ribosome. In Cereibacter sphaeroides (strain ATCC 17029 / ATH 2.4.9) (Rhodobacter sphaeroides), this protein is Large ribosomal subunit protein uL2.